Reading from the N-terminus, the 763-residue chain is MFLNNQNFEKKTSSYSTNNNSSEKIVDLKNPQFIYKIRLESTSTDNLLHLDIDKSETDGPNTEQHLELSSPPRIDKKNKNFNKAHDLLDNKKNKNRQRKKIKNKIHIDDDDDNFSDSTSNSAQTAGDLAISLMRPPKPRSQSIKKVIGNNKIPQQKKQQVASSIDQSITLPNSPPESISLINPLTIQELSRLICIPETDIIKYLFLKGISVTINQTVDNTIISSVAKNFGIAVDSQEQNNKKKKLTNLDIPVIVDNHHCVNRPPVVTILGHVDHGKTSLLDYIHKSNNANKEVGGITQNIVAYEVEFKHQQIVFLDTPGHEAFTSMRSRGANLTDIAIIIIAADDGIKPQTIEAIQHLQKANVPFIVAISKIDKNLDSVDKIQHDLVAQNVISEKLGGSVPIIPISSVTGENIDKLLETILLLAELENLQADPTQLAQGVIIEAHLDKFHGPAATLLIQNGTLHIGDNMVIGMTHAKIRAIINNAKQKINLAAPSSVVEIWGLSSVPATGEVALVVNSDKEAKLKAIENESTNSIIVQKQKSLNSRITLDTISTINAKDENKQVTLIIKTDNQGSTEAILDSLSQFPQSKVQLNVLSIFPGEITATDVELASTTNSSLIGFNTNFAPGSRQAAAKLNVIIENYQIIYALIEGVREKMETLLDPEYSEVPVGEAEVGTVFSLANRKIAGCRVTNNKLLKNSWIKVLRENEIVYQGKIESLKRIREDVEEIQAGNECGIFISEFQLWQTGDKIQSFDLVPKKRSL.

Disordered stretches follow at residues 1–22, 52–122, and 149–168; these read MFLNNQNFEKKTSSYSTNNNSS, IDKS…SNSA, and NNKIPQQKKQQVASSIDQSI. The segment covering 13 to 22 has biased composition (low complexity); the sequence is SSYSTNNNSS. Residues 73-92 show a composition bias toward basic and acidic residues; sequence RIDKKNKNFNKAHDLLDNKK. Positions 93-104 are enriched in basic residues; the sequence is NKNRQRKKIKNK. Residues 151 to 168 are compositionally biased toward polar residues; it reads KIPQQKKQQVASSIDQSI. The tr-type G domain occupies 261–429; it reads NRPPVVTILG…ILLLAELENL (169 aa). GTP-binding positions include 270 to 277, 316 to 320, and 370 to 373; these read GHVDHGKT, DTPGH, and SKID.

Belongs to the TRAFAC class translation factor GTPase superfamily. Classic translation factor GTPase family. IF-2 subfamily.

The protein resides in the plastid. The protein localises to the chloroplast. Functionally, one of the essential components for the initiation of protein synthesis. Protects formylmethionyl-tRNA from spontaneous hydrolysis and promotes its binding to the 30S ribosomal subunits. Also involved in the hydrolysis of GTP during the formation of the 70S ribosomal complex. The polypeptide is Translation initiation factor IF-2, chloroplastic (infB) (Porphyra purpurea (Red seaweed)).